The chain runs to 125 residues: Large ribosomal subunit protein bL12 (125 aa).

It belongs to the bacterial ribosomal protein bL12 family. Homodimer. Part of the ribosomal stalk of the 50S ribosomal subunit. Forms a multimeric L10(L12)X complex, where L10 forms an elongated spine to which 2 to 4 L12 dimers bind in a sequential fashion. Binds GTP-bound translation factors.

Its function is as follows. Forms part of the ribosomal stalk which helps the ribosome interact with GTP-bound translation factors. Is thus essential for accurate translation. The polypeptide is Large ribosomal subunit protein bL12 (Francisella tularensis subsp. tularensis (strain SCHU S4 / Schu 4)).